Reading from the N-terminus, the 141-residue chain is ATP synthase epsilon chain (141 aa).

The protein belongs to the ATPase epsilon chain family. F-type ATPases have 2 components, CF(1) - the catalytic core - and CF(0) - the membrane proton channel. CF(1) has five subunits: alpha(3), beta(3), gamma(1), delta(1), epsilon(1). CF(0) has three main subunits: a, b and c.

It is found in the cell inner membrane. Functionally, produces ATP from ADP in the presence of a proton gradient across the membrane. The chain is ATP synthase epsilon chain from Desulfatibacillum aliphaticivorans.